Reading from the N-terminus, the 118-residue chain is UPF0342 protein ABC1519 (118 aa).

This sequence belongs to the UPF0342 family.

This chain is UPF0342 protein ABC1519, found in Shouchella clausii (strain KSM-K16) (Alkalihalobacillus clausii).